A 112-amino-acid chain; its full sequence is Putative pterin-4-alpha-carbinolamine dehydratase (112 aa).

The protein belongs to the pterin-4-alpha-carbinolamine dehydratase family.

The catalysed reaction is (4aS,6R)-4a-hydroxy-L-erythro-5,6,7,8-tetrahydrobiopterin = (6R)-L-erythro-6,7-dihydrobiopterin + H2O. The chain is Putative pterin-4-alpha-carbinolamine dehydratase from Dechloromonas aromatica (strain RCB).